We begin with the raw amino-acid sequence, 452 residues long: SAGA complex/transcription factor TFIID complex subunit Taf6 (452 aa).

Positions 4 to 68 (TVWNIESIKD…TSADISSALR (65 aa)) constitute a Histone-fold domain.

Belongs to the TAF6 family. As to quaternary structure, component of the 1.8 MDa SAGA (Spt-Ada-Gcn5 acetyltransferase) complex, which is composed of 19 subunits tra1, spt7, taf5, ngg1/ada3, sgf73, spt20, spt8, taf12, taf6, hfi1/ada1, ubp8, gcn5, ada2, spt3, sgf29, taf10, taf9, sgf11 and sus1. The SAGA complex is composed of 4 modules, namely the HAT (histone acetyltransferase) module (gcn5, ada2, ngg1/ada3 and sgf29), the DUB (deubiquitinating) module (ubp8, sgf11, sgf73 and sus1), the core or TAF (TBP-associated factor) module (taf5, taf6, taf9, taf10 and taf12), and the Tra1 or SPT (Suppressor of Ty) module (tra1, hfi1/ada1, spt3, spt7, spt8 and spt20). The Tra1/SPT module binds activators, the core module recruits TBP (TATA-binding protein), the HAT module contains the histone H3 acetyltransferase gcn5, and the DUB module comprises the histone H2B deubiquitinase ubp8. Interacts with gcn5, taf5 and taf73. Component of the 1.2 MDa TFIID complex, which is composed of TATA-binding protein (TBP) and the 14 TBP-associated factors (TAFs). It comprises 1 copy of each taf1, taf2, taf3, taf7, taf8, taf11, taf13, 2 copies of each taf4, taf5, taf6, taf9, taf10, taf12, and 3 copies of taf14. In TFIID, taf6 heterodimerizes with taf9, forming ultimately an octamer consisting of a taf6-taf9 heterotetramer core flanked by taf4-taf12 dimers on either side, similar to the histone H2A-H2B-H3-H4 octamer.

The protein resides in the nucleus. Functions as a component of both the DNA-binding general transcription initiation factor complex TFIID and the transcription coactivator SAGA complex. Binding of TFIID to a promoter (with or without TATA element) is the initial step in pre-initiation complex (PIC) formation. TFIID plays a key role in the regulation of gene expression by RNA polymerase II through different activities such as transcription activator interaction, core promoter recognition and selectivity, TFIIA and TFIIB interaction, chromatin modification (histone acetylation by TAF1), facilitation of DNA opening and initiation of transcription. SAGA acts as a general cofactor required for essentially all RNA polymerase II transcription. At the promoters, SAGA is required for transcription pre-initiation complex (PIC) recruitment. It influences RNA polymerase II transcriptional activity through different activities such as TBP interaction (via core/TAF module) and promoter selectivity, interaction with transcription activators (via Tra1/SPT module), and chromatin modification through histone acetylation (via HAT module) and deubiquitination (via DUB module). SAGA preferentially acetylates histones H3 (to form H3K9ac, H3K14ac, H3K18ac and H3K23ac) and H2B and deubiquitinates histone H2B. SAGA interacts with DNA via upstream activating sequences (UASs). The protein is SAGA complex/transcription factor TFIID complex subunit Taf6 of Schizosaccharomyces pombe (strain 972 / ATCC 24843) (Fission yeast).